Reading from the N-terminus, the 265-residue chain is Imidazole glycerol phosphate synthase subunit HisF (265 aa).

Active-site residues include aspartate 12 and aspartate 131.

It belongs to the HisA/HisF family. Heterodimer of HisH and HisF.

It is found in the cytoplasm. It catalyses the reaction 5-[(5-phospho-1-deoxy-D-ribulos-1-ylimino)methylamino]-1-(5-phospho-beta-D-ribosyl)imidazole-4-carboxamide + L-glutamine = D-erythro-1-(imidazol-4-yl)glycerol 3-phosphate + 5-amino-1-(5-phospho-beta-D-ribosyl)imidazole-4-carboxamide + L-glutamate + H(+). It participates in amino-acid biosynthesis; L-histidine biosynthesis; L-histidine from 5-phospho-alpha-D-ribose 1-diphosphate: step 5/9. Its function is as follows. IGPS catalyzes the conversion of PRFAR and glutamine to IGP, AICAR and glutamate. The HisF subunit catalyzes the cyclization activity that produces IGP and AICAR from PRFAR using the ammonia provided by the HisH subunit. This is Imidazole glycerol phosphate synthase subunit HisF from Alkalilimnicola ehrlichii (strain ATCC BAA-1101 / DSM 17681 / MLHE-1).